An 80-amino-acid polypeptide reads, in one-letter code: Delta-actitoxin-Amc2a (80 aa).

Positions 1-19 (MNKVLFLCLVVLCATSAFA) are cleaved as a signal peptide. A propeptide spanning residues 20–30 (AEEEYVERAPV) is cleaved from the precursor. 3 disulfide bridges follow: C37/C73, C39/C65, and C55/C74. P56 carries the post-translational modification Hydroxyproline.

Belongs to the sea anemone type 3 (BDS) potassium channel toxin family.

It is found in the secreted. The protein localises to the nematocyst. Neurotoxon that induces paralysis when injected into crabs. This is Delta-actitoxin-Amc2a from Antheopsis maculata (Sea anemone).